A 254-amino-acid polypeptide reads, in one-letter code: tRNA pseudouridine synthase A (254 aa).

Asp52 functions as the Nucleophile in the catalytic mechanism. Position 111 (Tyr111) interacts with substrate.

This sequence belongs to the tRNA pseudouridine synthase TruA family. In terms of assembly, homodimer.

The enzyme catalyses uridine(38/39/40) in tRNA = pseudouridine(38/39/40) in tRNA. Functionally, formation of pseudouridine at positions 38, 39 and 40 in the anticodon stem and loop of transfer RNAs. This chain is tRNA pseudouridine synthase A, found in Rhizorhabdus wittichii (strain DSM 6014 / CCUG 31198 / JCM 15750 / NBRC 105917 / EY 4224 / RW1) (Sphingomonas wittichii).